The following is a 245-amino-acid chain: tRNA pseudouridine synthase A (245 aa).

The Nucleophile role is filled by Asp52. Tyr111 contacts substrate.

The protein belongs to the tRNA pseudouridine synthase TruA family. Homodimer.

The enzyme catalyses uridine(38/39/40) in tRNA = pseudouridine(38/39/40) in tRNA. In terms of biological role, formation of pseudouridine at positions 38, 39 and 40 in the anticodon stem and loop of transfer RNAs. The chain is tRNA pseudouridine synthase A from Thermotoga neapolitana (strain ATCC 49049 / DSM 4359 / NBRC 107923 / NS-E).